The primary structure comprises 476 residues: Aspartyl/glutamyl-tRNA(Asn/Gln) amidotransferase subunit B (476 aa).

The protein belongs to the GatB/GatE family. GatB subfamily. In terms of assembly, heterotrimer of A, B and C subunits.

It catalyses the reaction L-glutamyl-tRNA(Gln) + L-glutamine + ATP + H2O = L-glutaminyl-tRNA(Gln) + L-glutamate + ADP + phosphate + H(+). It carries out the reaction L-aspartyl-tRNA(Asn) + L-glutamine + ATP + H2O = L-asparaginyl-tRNA(Asn) + L-glutamate + ADP + phosphate + 2 H(+). Functionally, allows the formation of correctly charged Asn-tRNA(Asn) or Gln-tRNA(Gln) through the transamidation of misacylated Asp-tRNA(Asn) or Glu-tRNA(Gln) in organisms which lack either or both of asparaginyl-tRNA or glutaminyl-tRNA synthetases. The reaction takes place in the presence of glutamine and ATP through an activated phospho-Asp-tRNA(Asn) or phospho-Glu-tRNA(Gln). The sequence is that of Aspartyl/glutamyl-tRNA(Asn/Gln) amidotransferase subunit B from Lactobacillus delbrueckii subsp. bulgaricus (strain ATCC 11842 / DSM 20081 / BCRC 10696 / JCM 1002 / NBRC 13953 / NCIMB 11778 / NCTC 12712 / WDCM 00102 / Lb 14).